A 177-amino-acid chain; its full sequence is Large ribosomal subunit protein uL6 (177 aa).

The protein belongs to the universal ribosomal protein uL6 family. As to quaternary structure, part of the 50S ribosomal subunit.

Its function is as follows. This protein binds to the 23S rRNA, and is important in its secondary structure. It is located near the subunit interface in the base of the L7/L12 stalk, and near the tRNA binding site of the peptidyltransferase center. The sequence is that of Large ribosomal subunit protein uL6 from Brucella melitensis biotype 1 (strain ATCC 23456 / CCUG 17765 / NCTC 10094 / 16M).